A 258-amino-acid chain; its full sequence is MKEVDNLDSIKEEWVCETGPPDNQPLNDNPQKDCEYFVDSLFEEAEKAGAKCLSPTEQKKQVDVNIKLWKNGFTVNDDFRSYSDGASQQFLNSIKKGELPSELQGVFDKDEVDVKVEDKKNEVCMSTKPVFQPFSGQGHRLGSATPRIVSKAKSIEVDNKSTLSAVSLNNLEPITRIQIWLANGERTVQRFNISHRVSHIKDFIEKYQGTQRSPPFALATALPFLRFLDETLTLEEADLQNAVIIQRLQKTAEPFRKL.

The interval 1–152 (MKEVDNLDSI…SATPRIVSKA (152 aa)) is required for interaction with CHRNA3. A required for inhibition of CHRNA3 ubiquitination and translocation of CHRNA3 to the plasma membrane resulting in an increase in acetylcholine-gated nicotinic acetylcholine receptor currents region spans residues 1-165 (MKEVDNLDSI…EVDNKSTLSA (165 aa)). The 65-residue stretch at 61–125 (QVDVNIKLWK…VEDKKNEVCM (65 aa)) folds into the SEP domain. A required for interaction with VCP region spans residues 168-258 (LNNLEPITRI…QKTAEPFRKL (91 aa)). The UBX domain maps to 170–247 (NLEPITRIQI…DLQNAVIIQR (78 aa)).

In terms of assembly, part of a complex composed of STUB1/CHIP, VCP/p97, CHRNA3, and UBXN2A that modulates the ubiquitination and endoplasmic reticulum-associated degradation (ERAD) of CHRNA3. Within the complex UBXN2A acts as a scaffold protein required for the interaction of CHRNA3 with VCP/p97, this interaction also inhibits CHRNA3 ubiquitination by STUB1/CHIP and subsequently ERAD. Interacts (via SEP domain) with CHRNA3 and interacts (via UBX domain) with VCP/P97; these interactions are required for the interaction of CHRNA3 with the STUB1-VCP-UBXN2A complex. Interacts with HSPA9/MOT-2 (via SBD domain); the interaction inhibits HSPA9/MOT-2 interaction with and degradation of p53, thereby promotes p53 translocation to the nucleus. Interacts with RICTOR. Ubiquitinated.

The protein resides in the golgi apparatus. Its subcellular location is the endoplasmic reticulum. It is found in the perikaryon. The protein localises to the cell projection. It localises to the dendrite. The protein resides in the nucleus. Its subcellular location is the cytoplasm. In terms of biological role, acts to repress the ubiquitination and subsequent endoplasmic reticulum-associated degradation of CHRNA3 by the STUB1-VCP-UBXN2A complex in cortical neurons. Also acts to promote the translocation of CHRNA3 to the plasma membrane and subsequently increases plasma membrane acetylcholine-gated ion-channel activation. Plays a role in the inhibition of STUB1-mediated TP53 degradation, via its interaction with HSPA9 which acts to inhibit TP53 binding to HSPA9. Positively mediates the ubiquitination and proteosomal degradation of RICTOR, may thereby act as a negative regulator of the mTORC2 pathway. The sequence is that of UBX domain-containing protein 2A from Rattus norvegicus (Rat).